The chain runs to 204 residues: Large ribosomal subunit protein eL15 (204 aa).

2 disordered regions span residues 71 to 91 (RKRP…GVNQ) and 159 to 182 (REMR…HYSQ). Residues 159-174 (REMRGKTSAGRKHRGL) show a composition bias toward basic residues.

It belongs to the eukaryotic ribosomal protein eL15 family.

This Faxonius limosus (Spinycheek crayfish) protein is Large ribosomal subunit protein eL15 (RPL15).